The following is a 451-amino-acid chain: Probable metal transport system membrane protein CT_069 (451 aa).

8 consecutive transmembrane segments (helical) span residues 14–34 (SFLA…ILLV), 38–58 (PLLS…GALL), 70–90 (WVII…ISFL), 100–120 (SALC…VSYV), 145–165 (TEAK…WWWY), 192–212 (VLVF…ILLI), 233–253 (ILIL…YFSV), and 269–289 (ILPT…LCLI). Positions 432 to 451 (PDYDPHQREIPKRTRKSDGC) are disordered. The segment covering 434 to 451 (YDPHQREIPKRTRKSDGC) has biased composition (basic and acidic residues).

The protein belongs to the ABC-3 integral membrane protein family.

It is found in the cell inner membrane. Part of an ATP-driven transport system CT_067/CT_068/CT_069/CT_070 for a metal. This Chlamydia trachomatis serovar D (strain ATCC VR-885 / DSM 19411 / UW-3/Cx) protein is Probable metal transport system membrane protein CT_069.